Reading from the N-terminus, the 102-residue chain is UPF0751 protein DSY4013 (102 aa).

Belongs to the UPF0751 family.

The sequence is that of UPF0751 protein DSY4013 from Desulfitobacterium hafniense (strain Y51).